Consider the following 56-residue polypeptide: Small ribosomal subunit protein uS14 (56 aa).

Serine 9 bears the Phosphoserine mark. Arginine 12 carries the omega-N-methylarginine modification. The Zn(2+) site is built by cysteine 21, cysteine 24, cysteine 39, and cysteine 42. An N6-acetyllysine modification is found at lysine 48.

Belongs to the universal ribosomal protein uS14 family. Component of the 40S small ribosomal subunit. It depends on Zn(2+) as a cofactor.

Its subcellular location is the cytoplasm. It localises to the cytosol. The protein localises to the rough endoplasmic reticulum. Component of the small ribosomal subunit. The ribosome is a large ribonucleoprotein complex responsible for the synthesis of proteins in the cell. The sequence is that of Small ribosomal subunit protein uS14 (Rps29) from Mus musculus (Mouse).